Consider the following 572-residue polypeptide: Proline--tRNA ligase (572 aa).

The protein belongs to the class-II aminoacyl-tRNA synthetase family. ProS type 1 subfamily. As to quaternary structure, homodimer.

It is found in the cytoplasm. The catalysed reaction is tRNA(Pro) + L-proline + ATP = L-prolyl-tRNA(Pro) + AMP + diphosphate. Functionally, catalyzes the attachment of proline to tRNA(Pro) in a two-step reaction: proline is first activated by ATP to form Pro-AMP and then transferred to the acceptor end of tRNA(Pro). As ProRS can inadvertently accommodate and process non-cognate amino acids such as alanine and cysteine, to avoid such errors it has two additional distinct editing activities against alanine. One activity is designated as 'pretransfer' editing and involves the tRNA(Pro)-independent hydrolysis of activated Ala-AMP. The other activity is designated 'posttransfer' editing and involves deacylation of mischarged Ala-tRNA(Pro). The misacylated Cys-tRNA(Pro) is not edited by ProRS. The chain is Proline--tRNA ligase from Pectobacterium carotovorum subsp. carotovorum (strain PC1).